Consider the following 446-residue polypeptide: Probable glycine dehydrogenase (decarboxylating) subunit 1 (446 aa).

The protein belongs to the GcvP family. N-terminal subunit subfamily. In terms of assembly, the glycine cleavage system is composed of four proteins: P, T, L and H. In this organism, the P 'protein' is a heterodimer of two subunits.

It carries out the reaction N(6)-[(R)-lipoyl]-L-lysyl-[glycine-cleavage complex H protein] + glycine + H(+) = N(6)-[(R)-S(8)-aminomethyldihydrolipoyl]-L-lysyl-[glycine-cleavage complex H protein] + CO2. Its function is as follows. The glycine cleavage system catalyzes the degradation of glycine. The P protein binds the alpha-amino group of glycine through its pyridoxal phosphate cofactor; CO(2) is released and the remaining methylamine moiety is then transferred to the lipoamide cofactor of the H protein. The sequence is that of Probable glycine dehydrogenase (decarboxylating) subunit 1 from Protochlamydia amoebophila (strain UWE25).